The primary structure comprises 468 residues: RUS family member 1 (468 aa).

At A2 the chain carries N-acetylalanine. T49 bears the Phosphothreonine mark. Residues L247–L267 form a helical membrane-spanning segment.

This sequence belongs to the RUS1 family.

The protein localises to the membrane. The protein is RUS family member 1 of Homo sapiens (Human).